The chain runs to 381 residues: Acetylornithine deacetylase (381 aa).

His-79 contacts Zn(2+). Residue Asp-81 is part of the active site. Asp-111 provides a ligand contact to Zn(2+). Glu-143 is a catalytic residue. 3 residues coordinate Zn(2+): Glu-144, Glu-168, and His-354.

This sequence belongs to the peptidase M20A family. ArgE subfamily. As to quaternary structure, homodimer. The cofactor is Zn(2+). Co(2+) is required as a cofactor. It depends on glutathione as a cofactor.

It is found in the cytoplasm. The catalysed reaction is N(2)-acetyl-L-ornithine + H2O = L-ornithine + acetate. The protein operates within amino-acid biosynthesis; L-arginine biosynthesis; L-ornithine from N(2)-acetyl-L-ornithine (linear): step 1/1. In terms of biological role, catalyzes the hydrolysis of the amide bond of N(2)-acetylated L-amino acids. Cleaves the acetyl group from N-acetyl-L-ornithine to form L-ornithine, an intermediate in L-arginine biosynthesis pathway, and a branchpoint in the synthesis of polyamines. In Buchnera aphidicola subsp. Acyrthosiphon pisum (strain 5A), this protein is Acetylornithine deacetylase.